We begin with the raw amino-acid sequence, 2022 residues long: Transient receptor potential cation channel subfamily M member 6 (2022 aa).

Residues 1–741 lie on the Cytoplasmic side of the membrane; sequence MKEQPVLERL…MWMGRLKMRK (741 aa). A helical membrane pass occupies residues 742-762; the sequence is NSWLKIIISIILPPTILTLEF. Over 763-841 the chain is Extracellular; it reads KSKAEMSHVP…YEFYSAPIVK (79 aa). Residues 842-862 traverse the membrane as a helical segment; that stretch reads FWFYTMAYLAFLMLFTYTVLV. Over 863–905 the chain is Cytoplasmic; sequence EMQPQPSVQEWLVSIYIFTNAIEVVREICISEPGKFTQKVKVW. A helical transmembrane segment spans residues 906–926; that stretch reads ISEYWNLTETVAIGLFSAGFV. Residues 927–939 lie on the Extracellular side of the membrane; it reads LRWGDPPFHTAGR. The helical transmembrane segment at 940–960 threads the bilayer; it reads LIYCIDIIFWFSRLLDFFAVN. At 961–972 the chain is on the cytoplasmic side; the sequence is QHAGPYVTMIAK. A helical transmembrane segment spans residues 973–993; sequence MTANMFYIVIIMAIVLLSFGV. Residues 994 to 1012 lie on the Extracellular side of the membrane; it reads ARKAILSPKEPPSWSLARD. The pore-forming intramembrane region spans 1013–1033; sequence IVFEPYWMIYGEVYAGEIDVC. Over 1034–1047 the chain is Extracellular; the sequence is SSQPSCPPGSFLTP. A helical membrane pass occupies residues 1048-1068; that stretch reads FLQAVYLFVQYIIMVNLLIAF. Residues 1069-2022 lie on the Cytoplasmic side of the membrane; it reads FNNVYLDMES…RNSPEDDMQL (954 aa). Residues 1479–1516 are disordered; the sequence is TCDSDSSRSEQHQKQAQDSSLSDNSTRSAQSSECSEVG. Residues 1483-1493 are compositionally biased toward basic and acidic residues; sequence DSSRSEQHQKQ. Over residues 1494-1512 the composition is skewed to polar residues; sequence AQDSSLSDNSTRSAQSSEC. One can recognise an Alpha-type protein kinase domain in the interval 1750–1980; that stretch reads NLDKSMSSWS…CCRKLKLPDL (231 aa). Positions 1777, 1778, 1779, 1780, and 1804 each coordinate ADP. Thr1851 is modified (phosphothreonine; by autocatalysis). ADP contacts are provided by Glu1876 and Met1879. His1909 provides a ligand contact to Zn(2+). The active-site Proton acceptor is Asp1923. An ADP-binding site is contributed by Asp1933. Residues His1966, Cys1968, and Cys1972 each contribute to the Zn(2+) site. Residues 1997–2022 are disordered; it reads EIKIESAEEPPARETGRNSPEDDMQL. Basic and acidic residues predominate over residues 1998 to 2016; the sequence is IKIESAEEPPARETGRNSP.

It in the C-terminal section; belongs to the protein kinase superfamily. Alpha-type protein kinase family. ALPK subfamily. This sequence in the N-terminal section; belongs to the transient receptor (TC 1.A.4) family. LTrpC subfamily. TRPM6 sub-subfamily. Homomers. Forms heteromers with TRPM7; TRPM6 increases the current amplitude of TRPM6/7 heteromers as compared to TRPM7 homomer. Interacts (via kinase domain) with RACK1. Autophosphorylated; autophosphorylation controlls the protein kinase activity of TRPM6 towards their substrates. Autophosphorylation of Thr-1851 in the kinase domain is essential for the inhibitory effect of RACK1. In terms of processing, the C-terminus of TRPM6 is proteolytically cleaved in vivo, in a cell type-specific fashion, releasing the kinase module from the transmembrane domain. The cleaved kinase fragments are translocated to the nucleus to phosphorylate histones and regulate gene expression. Highly expressed in kidney and colon. Isoform TRPM6a and isoform TRPM6b, are coexpressed with TRPM7 in kidney, and testis, and are also found in several cell lines of lung origin. Isoform TRPM6c is detected only in testis and in NCI-H510A small cell lung carcinoma cells.

The protein localises to the cell membrane. Its subcellular location is the apical cell membrane. It localises to the nucleus. The enzyme catalyses L-seryl-[protein] + ATP = O-phospho-L-seryl-[protein] + ADP + H(+). The catalysed reaction is L-threonyl-[protein] + ATP = O-phospho-L-threonyl-[protein] + ADP + H(+). It carries out the reaction Mg(2+)(in) = Mg(2+)(out). It catalyses the reaction Ca(2+)(in) = Ca(2+)(out). The enzyme catalyses Zn(2+)(in) = Zn(2+)(out). Its activity is regulated as follows. Strongly inhibited by intracellular Mg(2+); unlikely to be active at physiological levels of intracellular Mg(2+). In the heteromeric TRPM6-TRPM7 channels complexes, TRPM7 are able to offset the very high sensitivity of TRPM6 to cytosolic Mg(2+) to physiologically relevant concentrations, whereas TRPM6 relieve TRPM7 from the inhibitory action of Mg-ATP. Consequently, the association of TRPM6 with TRPM7 allow for high constitutive activity of TRPM6/7 in the presence of physiological levels of Mg(2+) and Mg-ATP. The kinase activity is controlled through the autophosphorylation of a serine/threonine-rich region located to the N-terminal of the catalytic domain. Its function is as follows. Bifunctional protein that combines an ion channel with an intrinsic kinase domain, enabling it to modulate cellular functions either by conducting ions through the pore or by phosphorylating downstream proteins via its kinase domain. Crucial for Mg(2+) homeostasis. Has an important role in epithelial Mg(2+) transport and in the active Mg(2+) absorption in the gut and kidney. However, whether TRPM6 forms functional homomeric channels by itself or functions primarily as a subunit of heteromeric TRPM6-TRPM7 channels, is still under debate. Functionally, the C-terminal kinase domain can be cleaved from the channel segment in a cell-type-specific fashion. The cleaved kinase fragments can translocate to the nucleus, and bind chromatin-remodeling complex proteins to ultimately phosphorylate specific Ser/Thr residues of histones known to be functionally important for cell differentiation and development. The protein is Transient receptor potential cation channel subfamily M member 6 (TRPM6) of Homo sapiens (Human).